The following is a 1372-amino-acid chain: DNA-directed RNA polymerase subunit beta' (1372 aa).

Positions 69, 71, 84, and 87 each coordinate Zn(2+). Positions 460, 462, and 464 each coordinate Mg(2+). The Zn(2+) site is built by cysteine 808, cysteine 882, cysteine 889, and cysteine 892.

This sequence belongs to the RNA polymerase beta' chain family. As to quaternary structure, the RNAP catalytic core consists of 2 alpha, 1 beta, 1 beta' and 1 omega subunit. When a sigma factor is associated with the core the holoenzyme is formed, which can initiate transcription. Requires Mg(2+) as cofactor. Zn(2+) serves as cofactor.

The catalysed reaction is RNA(n) + a ribonucleoside 5'-triphosphate = RNA(n+1) + diphosphate. Functionally, DNA-dependent RNA polymerase catalyzes the transcription of DNA into RNA using the four ribonucleoside triphosphates as substrates. The polypeptide is DNA-directed RNA polymerase subunit beta' (Rickettsia akari (strain Hartford)).